The primary structure comprises 58 residues: Small ribosomal subunit protein eS31 (58 aa).

The Zn(2+) site is built by cysteine 29, cysteine 32, cysteine 48, and cysteine 51. A C4-type zinc finger spans residues 29–51; it reads CPRCGSFMAHHLKPVPRWHCGKC.

Belongs to the eukaryotic ribosomal protein eS31 family. Part of the 30S ribosomal subunit. It depends on Zn(2+) as a cofactor.

The sequence is that of Small ribosomal subunit protein eS31 from Ignicoccus hospitalis (strain KIN4/I / DSM 18386 / JCM 14125).